The following is a 102-amino-acid chain: Small ribosomal subunit protein uS10 (102 aa).

The protein belongs to the universal ribosomal protein uS10 family. In terms of assembly, part of the 30S ribosomal subunit.

Involved in the binding of tRNA to the ribosomes. The sequence is that of Small ribosomal subunit protein uS10 from Bartonella tribocorum (strain CIP 105476 / IBS 506).